The primary structure comprises 330 residues: Inactive hydroxysteroid dehydrogenase-like protein 1 (330 aa).

Ala-2 carries the post-translational modification N-acetylalanine. Positions 2 to 82 are required for mitochondria translocation; it reads AAVDSFYLLY…SGATDGIGKA (81 aa). Residues 74–80, Asp-125, and Lys-222 contribute to the NADP(+) site; that span reads GATDGIG.

The protein belongs to the short-chain dehydrogenases/reductases (SDR) family. 17-beta-HSD 3 subfamily. As to quaternary structure, interacts with STYXL1. Highly expressed in testis and ovary. Also detected in thyroid, spinal cord, adrenal gland, heart, placenta, skeletal muscle, small intestine, colon, spleen, prostate and pancreas.

The protein localises to the mitochondrion. The chain is Inactive hydroxysteroid dehydrogenase-like protein 1 (HSDL1) from Homo sapiens (Human).